Here is a 1528-residue protein sequence, read N- to C-terminus: DNA topoisomerase 2-alpha (1528 aa).

Methionine 1 carries the post-translational modification N-acetylmethionine. The residue at position 4 (serine 4) is a Phosphoserine. Lysine 17 is covalently cross-linked (Glycyl lysine isopeptide (Lys-Gly) (interchain with G-Cter in SUMO2)). Residues asparagine 90, asparagine 119, and 147–149 (SSN) contribute to the ATP site. Glycyl lysine isopeptide (Lys-Gly) (interchain with G-Cter in SUMO2) cross-links involve residues lysine 155 and lysine 156. 160–167 (GRNGYGAK) is an ATP binding site. Threonine 281 bears the Phosphothreonine mark. The segment at 341 to 343 (KKK) is interaction with DNA. Residue lysine 351 forms a Glycyl lysine isopeptide (Lys-Gly) (interchain with G-Cter in SUMO2) linkage. 375–377 (QTK) provides a ligand contact to ATP. Residues lysine 385, lysine 396, lysine 415, lysine 417, lysine 424, and lysine 439 each participate in a glycyl lysine isopeptide (Lys-Gly) (interchain with G-Cter in SUMO2) cross-link. The 118-residue stretch at 454 to 571 (CTLILTEGDS…SLLRHRFLEE (118 aa)) folds into the Toprim domain. Mg(2+) is bound at residue glutamate 460. Residues lysine 465, lysine 479, and lysine 528 each participate in a glycyl lysine isopeptide (Lys-Gly) (interchain with G-Cter in SUMO2) cross-link. The Mg(2+) site is built by aspartate 540 and aspartate 542. Residues lysine 583, lysine 598, lysine 613, lysine 621, lysine 624, lysine 631, lysine 638, lysine 654, lysine 661, and lysine 675 each participate in a glycyl lysine isopeptide (Lys-Gly) (interchain with G-Cter in SUMO2) cross-link. Positions 714–1168 (IPSMVDGLKP…SPSDLWKEDL (455 aa)) constitute a Topo IIA-type catalytic domain. The O-(5'-phospho-DNA)-tyrosine intermediate role is filled by tyrosine 804. An interaction with DNA region spans residues 989 to 998 (KLQSSLTCNS). A Glycyl lysine isopeptide (Lys-Gly) (interchain with G-Cter in SUMO2) cross-link involves residue lysine 1074. 2 disordered regions span residues 1090–1118 (KEAQQKVPDEEENEESDTETSTSDSAAEA) and 1183–1211 (KQDEQVGLPGKAGKAKGKKAQMCADVLPS). Acidic residues predominate over residues 1098–1107 (DEEENEESDT). Serine 1105 bears the Phosphoserine; by CK1 mark. Residues 1108 to 1118 (ETSTSDSAAEA) show a composition bias toward low complexity. Residues lysine 1193 and lysine 1201 each participate in a glycyl lysine isopeptide (Lys-Gly) (interchain with G-Cter in SUMO2) cross-link. At serine 1211 the chain carries Phosphoserine. A Glycyl lysine isopeptide (Lys-Gly) (interchain with G-Cter in SUMO2) cross-link involves residue lysine 1226. The interval 1229-1528 (AEKKIRKKIK…EESDDDDDLF (300 aa)) is disordered. Lysine 1238 participates in a covalent cross-link: Glycyl lysine isopeptide (Lys-Gly) (interchain with G-Cter in SUMO1); alternate. A Glycyl lysine isopeptide (Lys-Gly) (interchain with G-Cter in SUMO2); alternate cross-link involves residue lysine 1238. Threonine 1245 carries the post-translational modification Phosphothreonine. A compositionally biased stretch (basic and acidic residues) spans 1258–1270 (QRIEKKQKKEPGA). Glycyl lysine isopeptide (Lys-Gly) (interchain with G-Cter in SUMO2) cross-links involve residues lysine 1272, lysine 1279, and lysine 1282. 4 positions are modified to phosphoserine: serine 1291, serine 1293, serine 1295, and serine 1298. A compositionally biased stretch (low complexity) spans 1296-1306 (DVSSNESNVDV). The residue at position 1323 (threonine 1323) is a Phosphothreonine. Residues 1326–1345 (LDSDEDFSGLDEKDEDEDFL) show a composition bias toward acidic residues. A phosphoserine mark is found at serine 1328 and serine 1333. The residue at position 1350 (threonine 1350) is a Phosphothreonine. Glycyl lysine isopeptide (Lys-Gly) (interchain with G-Cter in SUMO2) cross-links involve residues lysine 1359 and lysine 1363. Serine 1370 and serine 1373 each carry phosphoserine. A Glycyl lysine isopeptide (Lys-Gly) (interchain with G-Cter in SUMO2) cross-link involves residue lysine 1382. Residues serine 1384 and serine 1388 each carry the phosphoserine modification. Lysine 1418 is covalently cross-linked (Glycyl lysine isopeptide (Lys-Gly) (interchain with G-Cter in SUMO2); alternate). Position 1418 is an N6-acetyllysine; alternate (lysine 1418). Residues 1429–1435 (KKRAAPK) form an interaction with PLSCR1 region. Lysine 1438 participates in a covalent cross-link: Glycyl lysine isopeptide (Lys-Gly) (interchain with G-Cter in SUMO2); alternate. N6-acetyllysine; alternate is present on lysine 1438. Glycyl lysine isopeptide (Lys-Gly) (interchain with G-Cter in SUMO2) cross-links involve residues lysine 1450 and lysine 1455. Serine 1465, serine 1467, serine 1470, and serine 1472 each carry phosphoserine. Residues lysine 1480 and lysine 1488 each participate in a glycyl lysine isopeptide (Lys-Gly) (interchain with G-Cter in SUMO2) cross-link. Positions 1506-1519 (AKSDRARKPIKYLE) are enriched in basic and acidic residues. Serine 1521 is subject to Phosphoserine.

Belongs to the type II topoisomerase family. As to quaternary structure, homodimer. Interacts with COPS5. Interacts with RECQL5; this stimulates DNA decatenation. Interacts with SETMAR; stimulates the topoisomerase activity. Interacts with DHX9; this interaction occurs in a E2 enzyme UBE2I- and RNA-dependent manner, negatively regulates DHX9-mediated double-stranded DNA and RNA duplex helicase activity and stimulates TOP2A-mediated supercoiled DNA relaxation activity. Interacts with HNRNPU (via C-terminus); this interaction protects the topoisomerase TOP2A from degradation and positively regulates the relaxation of supercoiled DNA in a RNA-dependent manner. Interacts with MCM3AP. Interacts with ERCC6. Interacts with PLSCR1. Interacts with GCNA; this interaction allows the resolution of topoisomerase II (TOP2A) DNA-protein cross-links. Interacts with POL1RA/RPA1 (via dock II) and UBTF in the context of Pol I complex; may assist Pol I transcription initiation by releasing supercoils occurring during DNA unwinding. Interacts with TPRN; TPRN interacts with a number of DNA damage response proteins, is recruited to sites of DNA damage and may play a role in DNA damage repair. Mg(2+) is required as a cofactor. Mn(2+) serves as cofactor. Requires Ca(2+) as cofactor. Post-translationally, phosphorylation has no effect on catalytic activity. However, phosphorylation at Ser-1105 by CSNK1D/CK1 promotes DNA cleavable complex formation.

The protein resides in the cytoplasm. The protein localises to the nucleus. Its subcellular location is the nucleoplasm. It is found in the nucleolus. It catalyses the reaction ATP-dependent breakage, passage and rejoining of double-stranded DNA.. Functionally, key decatenating enzyme that alters DNA topology by binding to two double-stranded DNA molecules, generating a double-stranded break in one of the strands, passing the intact strand through the broken strand, and religating the broken strand. May play a role in regulating the period length of BMAL1 transcriptional oscillation. The protein is DNA topoisomerase 2-alpha (Top2a) of Mus musculus (Mouse).